The following is a 271-amino-acid chain: Shikimate dehydrogenase (NADP(+)) (271 aa).

Shikimate-binding positions include 16–18 (SRS) and Thr63. Residue Lys67 is the Proton acceptor of the active site. 2 residues coordinate shikimate: Asn88 and Asp104. NADP(+) is bound by residues 128-132 (GAGGA), 152-157 (NRTASK), and Met215. Residue Tyr217 participates in shikimate binding. Position 238 (Gly238) interacts with NADP(+).

The protein belongs to the shikimate dehydrogenase family. As to quaternary structure, homodimer.

It catalyses the reaction shikimate + NADP(+) = 3-dehydroshikimate + NADPH + H(+). It participates in metabolic intermediate biosynthesis; chorismate biosynthesis; chorismate from D-erythrose 4-phosphate and phosphoenolpyruvate: step 4/7. Involved in the biosynthesis of the chorismate, which leads to the biosynthesis of aromatic amino acids. Catalyzes the reversible NADPH linked reduction of 3-dehydroshikimate (DHSA) to yield shikimate (SA). This chain is Shikimate dehydrogenase (NADP(+)), found in Chromohalobacter salexigens (strain ATCC BAA-138 / DSM 3043 / CIP 106854 / NCIMB 13768 / 1H11).